The primary structure comprises 124 residues: MANSGVMKLVCLVLACMVVAAPLAEAAITCGQVVSKLAPCLTYLRSGGAVPGTCCNAVKNLNNSAKTTPDRQTACGCLKNAYNSISGINAAYAGGLPAKCGVNLPYKISPSINCATYTLSLYNF.

An N-terminal signal peptide occupies residues 1 to 26 (MANSGVMKLVCLVLACMVVAAPLAEA). 4 disulfide bridges follow: Cys-30/Cys-77, Cys-40/Cys-54, Cys-55/Cys-100, and Cys-75/Cys-114.

It belongs to the plant LTP family.

In terms of biological role, plant non-specific lipid-transfer proteins transfer phospholipids as well as galactolipids across membranes. May play a role in wax or cutin deposition in the cell walls of expanding epidermal cells and certain secretory tissues. The protein is Non-specific lipid-transfer protein of Macadamia integrifolia (Macadamia nut).